A 494-amino-acid polypeptide reads, in one-letter code: 3-octaprenyl-4-hydroxybenzoate carboxy-lyase (494 aa).

Mn(2+) is bound at residue N172. Prenylated FMN contacts are provided by residues 175 to 177, 189 to 191, and 194 to 195; these read IYR, RWL, and RG. E238 contributes to the Mn(2+) binding site. Residue D287 is the Proton donor of the active site.

It belongs to the UbiD family. As to quaternary structure, homohexamer. Prenylated FMN serves as cofactor. It depends on Mn(2+) as a cofactor.

It is found in the cell membrane. The enzyme catalyses a 4-hydroxy-3-(all-trans-polyprenyl)benzoate + H(+) = a 2-(all-trans-polyprenyl)phenol + CO2. The protein operates within cofactor biosynthesis; ubiquinone biosynthesis. Functionally, catalyzes the decarboxylation of 3-octaprenyl-4-hydroxy benzoate to 2-octaprenylphenol, an intermediate step in ubiquinone biosynthesis. The protein is 3-octaprenyl-4-hydroxybenzoate carboxy-lyase of Citrobacter koseri (strain ATCC BAA-895 / CDC 4225-83 / SGSC4696).